The following is a 266-amino-acid chain: Hemin import ATP-binding protein HmuV (266 aa).

Residues 12–248 (LEASHLHYHV…ETLTQWYQAD (237 aa)) form the ABC transporter domain. 44–51 (GPNGAGKS) contributes to the ATP binding site.

Belongs to the ABC transporter superfamily. Heme (hemin) importer (TC 3.A.1.14.5) family. In terms of assembly, the complex is composed of two ATP-binding proteins (HmuV), two transmembrane proteins (HmuU) and a solute-binding protein (HmuT).

The protein resides in the cell inner membrane. Its function is as follows. Part of the ABC transporter complex HmuTUV involved in hemin import. Responsible for energy coupling to the transport system. In Yersinia pestis bv. Antiqua (strain Antiqua), this protein is Hemin import ATP-binding protein HmuV.